Here is a 363-residue protein sequence, read N- to C-terminus: Phosphoserine aminotransferase (363 aa).

Residue Arg-42 participates in L-glutamate binding. Pyridoxal 5'-phosphate is bound by residues 76–77, Trp-102, Thr-156, Asp-175, and Gln-198; that span reads GR. Lys-199 is modified (N6-(pyridoxal phosphate)lysine). 240-241 serves as a coordination point for pyridoxal 5'-phosphate; sequence NT.

Belongs to the class-V pyridoxal-phosphate-dependent aminotransferase family. SerC subfamily. Homodimer. The cofactor is pyridoxal 5'-phosphate.

It localises to the cytoplasm. It carries out the reaction O-phospho-L-serine + 2-oxoglutarate = 3-phosphooxypyruvate + L-glutamate. The catalysed reaction is 4-(phosphooxy)-L-threonine + 2-oxoglutarate = (R)-3-hydroxy-2-oxo-4-phosphooxybutanoate + L-glutamate. The protein operates within amino-acid biosynthesis; L-serine biosynthesis; L-serine from 3-phospho-D-glycerate: step 2/3. It functions in the pathway cofactor biosynthesis; pyridoxine 5'-phosphate biosynthesis; pyridoxine 5'-phosphate from D-erythrose 4-phosphate: step 3/5. Functionally, catalyzes the reversible conversion of 3-phosphohydroxypyruvate to phosphoserine and of 3-hydroxy-2-oxo-4-phosphonooxybutanoate to phosphohydroxythreonine. The polypeptide is Phosphoserine aminotransferase (Shewanella baltica (strain OS185)).